The chain runs to 273 residues: Pantothenate synthetase (273 aa).

ATP is bound at residue 27-34 (MGALHEGH). His-34 (proton donor) is an active-site residue. Gln-58 is a (R)-pantoate binding site. Gln-58 provides a ligand contact to beta-alanine. 144–147 (GKKD) contributes to the ATP binding site. Residue Gln-150 coordinates (R)-pantoate. Residues Val-173 and 181–184 (LSSR) contribute to the ATP site.

Belongs to the pantothenate synthetase family. In terms of assembly, homodimer.

The protein localises to the cytoplasm. It catalyses the reaction (R)-pantoate + beta-alanine + ATP = (R)-pantothenate + AMP + diphosphate + H(+). It participates in cofactor biosynthesis; (R)-pantothenate biosynthesis; (R)-pantothenate from (R)-pantoate and beta-alanine: step 1/1. In terms of biological role, catalyzes the condensation of pantoate with beta-alanine in an ATP-dependent reaction via a pantoyl-adenylate intermediate. The protein is Pantothenate synthetase of Sulfurimonas denitrificans (strain ATCC 33889 / DSM 1251) (Thiomicrospira denitrificans (strain ATCC 33889 / DSM 1251)).